Consider the following 635-residue polypeptide: Protein NSP-INTERACTING KINASE 2 (635 aa).

A signal peptide spans 1 to 32; the sequence is MLQGRREAKKSYALFSSTFFFFFICFLSSSSA. Topologically, residues 33-248 are extracellular; that stretch reads ELTDKGVNFE…DGGTKNRKIA (216 aa). 2 N-linked (GlcNAc...) asparagine glycosylation sites follow: asparagine 92 and asparagine 103. LRR repeat units lie at residues 104 to 128, 129 to 153, 155 to 176, and 177 to 200; these read LTNL…IGKL, MKLK…SYSK, LQYL…LANM, and TQLT…LAKT. N-linked (GlcNAc...) asparagine glycosylation is found at asparagine 140, asparagine 162, asparagine 175, asparagine 188, asparagine 219, asparagine 231, and asparagine 235. The interval 214–242 is disordered; sequence TEKDCNGTQPKPMSITLNSSQNKSSDGGT. Polar residues predominate over residues 219-241; the sequence is NGTQPKPMSITLNSSQNKSSDGG. Residues 249-269 traverse the membrane as a helical segment; that stretch reads VVFGVSLTCVCLLIIGFGFLL. Residues 270–635 lie on the Cytoplasmic side of the membrane; it reads WWRRRHNKQV…VQAMELSGPR (366 aa). The residue at position 309 (threonine 309) is a Phosphothreonine. One can recognise a Protein kinase domain in the interval 312–591; it reads FSSKNLVGKG…EGDGLVEKWE (280 aa). ATP is bound by residues 318 to 326 and lysine 340; that span reads VGKGGFGNV. A phosphoserine mark is found at serine 393 and serine 396. Residue threonine 408 is modified to Phosphothreonine. The interaction with geminivirus NSP protein stretch occupies residues 422–502; it reads YLHEQCDPKI…DVFGFGILLL (81 aa). Catalysis depends on aspartate 435, which acts as the Proton acceptor. Phosphothreonine occurs at positions 468, 469, and 474. Residue tyrosine 482 is modified to Phosphotyrosine. Serine 484 bears the Phosphoserine mark. The residue at position 485 (threonine 485) is a Phosphothreonine. Serine 489 carries the post-translational modification Phosphoserine. Threonine 564 is modified (phosphothreonine). A compositionally biased stretch (polar residues) spans 593 to 613; it reads SSQRAETNRSYSKPNEFSSSE. Positions 593–621 are disordered; it reads SSQRAETNRSYSKPNEFSSSERYSDLTDD.

The protein belongs to the protein kinase superfamily. Ser/Thr protein kinase family. Oligomer. Interacts with geminivirus nuclear shuttle protein (NSP). Post-translationally, autophosphorylated. Expressed in flowers and roots.

The protein localises to the cell membrane. It carries out the reaction L-seryl-[protein] + ATP = O-phospho-L-seryl-[protein] + ADP + H(+). It catalyses the reaction L-threonyl-[protein] + ATP = O-phospho-L-threonyl-[protein] + ADP + H(+). Its activity is regulated as follows. Inhibited by the viral nuclear shuttle protein (NSP) that binds to the region required for oligomerization. Involved in defense response to geminivirus infection. Phosphorylates RPL10A in vitro. The polypeptide is Protein NSP-INTERACTING KINASE 2 (NIK2) (Arabidopsis thaliana (Mouse-ear cress)).